The primary structure comprises 103 residues: Mitochondrial import inner membrane translocase subunit Tim10 B (103 aa).

The short motif at 28-52 (CFQRCVPSLHHRALDAEEEACLHSC) is the Twin CX3C motif element. 2 disulfides stabilise this stretch: Cys-28–Cys-52 and Cys-32–Cys-48.

This sequence belongs to the small Tim family. Component of the TIM22 complex, which core is composed of TIMM22, associated with TIMM10 (TIMM10A and/or TIMM10B), TIMM9, AGK and TIMM29. Ubiquitous, with highest expression in heart, kidney, liver and skeletal muscle.

The protein localises to the mitochondrion inner membrane. Functionally, component of the TIM22 complex, a complex that mediates the import and insertion of multi-pass transmembrane proteins into the mitochondrial inner membrane. The TIM22 complex forms a twin-pore translocase that uses the membrane potential as the external driving force. In the TIM22 complex, it may act as a docking point for the soluble 70 kDa complex that guides the target proteins in transit through the aqueous mitochondrial intermembrane space. The polypeptide is Mitochondrial import inner membrane translocase subunit Tim10 B (TIMM10B) (Homo sapiens (Human)).